Reading from the N-terminus, the 504-residue chain is MEEFQRYLEPDRFRQHDFLYPLLFREYIYALAHDHGFNSYMLLENIGYDNKSSLLIVKRLITRMYQHNYLMISANDSNQNQFFGYNKNLHSQIISEGFAVIVEIPFSLRLISSFEGAEIVISYKLRSIHSIFPFLEDKLPHLNYTTDVRIPYPIHLEILIQTLRSRVKDASYLHLLRFFLHQYSNWNILIITTKSISIFSKSNPRFFLFLYNSHICQYESIFLFLGNQSSHLRIISSGVLFERLYLHKKIEHFAEVFANDFPVIPCFLKDPFMHYVRYQGKSILASKDTPLLMNKWKYYLVNLWQCHFYVWSHPGRIHINQLSKHSLDFWGYFSSVQLNPSVVRSQMLENSFLINNAPKKLDIIVPIIPLIGSLAKARFCNALGHPISKLTRADLSDFEILNRFLRICRNLSHYYSGSSKKKSMYRIKYILRLSCVKTLARKHKSTARAFLKKVGSEFVQEFFTEEEEFLSLIFPRTSFTLRRLYRGRVWYLDIIFINGLANHE.

This sequence belongs to the intron maturase 2 family. MatK subfamily.

It is found in the plastid. The protein localises to the chloroplast. In terms of biological role, usually encoded in the trnK tRNA gene intron. Probably assists in splicing its own and other chloroplast group II introns. This is Maturase K from Fagus hayatae (Formosan elm).